The primary structure comprises 1389 residues: DNA-directed RNA polymerase subunit beta'' (1389 aa).

Zn(2+)-binding residues include C220, C290, C297, and C300.

The protein belongs to the RNA polymerase beta' chain family. RpoC2 subfamily. As to quaternary structure, in plastids the minimal PEP RNA polymerase catalytic core is composed of four subunits: alpha, beta, beta', and beta''. When a (nuclear-encoded) sigma factor is associated with the core the holoenzyme is formed, which can initiate transcription. Zn(2+) is required as a cofactor.

It is found in the plastid. Its subcellular location is the chloroplast. The enzyme catalyses RNA(n) + a ribonucleoside 5'-triphosphate = RNA(n+1) + diphosphate. DNA-dependent RNA polymerase catalyzes the transcription of DNA into RNA using the four ribonucleoside triphosphates as substrates. This chain is DNA-directed RNA polymerase subunit beta'', found in Chloranthus spicatus (Chulantree).